Consider the following 515-residue polypeptide: Maturase K (515 aa).

Belongs to the intron maturase 2 family. MatK subfamily.

It localises to the plastid. Its subcellular location is the chloroplast. In terms of biological role, usually encoded in the trnK tRNA gene intron. Probably assists in splicing its own and other chloroplast group II introns. This is Maturase K from Pinus elliottii (Slash pine).